Here is a 503-residue protein sequence, read N- to C-terminus: NAD-dependent protein deacetylase HST1 (503 aa).

The 286-residue stretch at 183–468 (RLPNFNTIDH…SLVAKKCHWD (286 aa)) folds into the Deacetylase sirtuin-type domain. Residues 208–227 (GAGV…EGFY) and 290–293 (QNID) contribute to the NAD(+) site. Residue His310 is the Proton acceptor of the active site. Zn(2+) contacts are provided by Cys318, Cys321, Cys342, and Cys345. NAD(+) contacts are provided by residues 412 to 414 (GTS), 437 to 439 (NRD), and Cys454.

Belongs to the sirtuin family. Class I subfamily. In terms of assembly, identified in the Set3C complex with HOS2, SIF2, SNT1, CPR1, HOS4/YIL112W and SET3. Its presence is however not essential for meiotic repression by the Set3C complex. Interacts with SUM1 and RFM1. The interaction with SUM1 is mediated by RFM1. Requires Zn(2+) as cofactor.

It localises to the nucleus. It catalyses the reaction N(6)-acetyl-L-lysyl-[protein] + NAD(+) + H2O = 2''-O-acetyl-ADP-D-ribose + nicotinamide + L-lysyl-[protein]. Its function is as follows. NAD-dependent histone deacetylase involved in telomeric silencing. Histone deacetylase proteins act via the formation of large multiprotein complexes that are responsible for the deacetylation of lysine residues on the N-terminal part of the core histones (H2A, H2B, H3 and H4). Histone deacetylation gives a tag for epigenetic repression and plays an important role in transcriptional regulation, cell cycle progression and developmental events. Restores silencing at HMR in SIR2 mutants when overexpressed. Required to repress middle sporulation genes during vegetative growth. Acts as a sensor of NAD(+) levels and regulator of NAD(+) biosynthesis. Regulates the gene expression of de novo NAD(+) biosynthesis genes. This chain is NAD-dependent protein deacetylase HST1 (HST1), found in Saccharomyces cerevisiae (strain ATCC 204508 / S288c) (Baker's yeast).